The following is a 336-amino-acid chain: 4-hydroxy-3-methylbut-2-enyl diphosphate reductase (336 aa).

A [4Fe-4S] cluster-binding site is contributed by C37. H66 and H99 together coordinate (2E)-4-hydroxy-3-methylbut-2-enyl diphosphate. 2 residues coordinate dimethylallyl diphosphate: H66 and H99. Isopentenyl diphosphate contacts are provided by H66 and H99. C121 lines the [4Fe-4S] cluster pocket. Residue H149 coordinates (2E)-4-hydroxy-3-methylbut-2-enyl diphosphate. H149 serves as a coordination point for dimethylallyl diphosphate. Residue H149 coordinates isopentenyl diphosphate. Residue E151 is the Proton donor of the active site. T189 contacts (2E)-4-hydroxy-3-methylbut-2-enyl diphosphate. C219 is a binding site for [4Fe-4S] cluster. (2E)-4-hydroxy-3-methylbut-2-enyl diphosphate is bound by residues S247, S248, N249, and S292. Residues S247, S248, N249, and S292 each contribute to the dimethylallyl diphosphate site. S247, S248, N249, and S292 together coordinate isopentenyl diphosphate.

It belongs to the IspH family. Requires [4Fe-4S] cluster as cofactor.

It catalyses the reaction isopentenyl diphosphate + 2 oxidized [2Fe-2S]-[ferredoxin] + H2O = (2E)-4-hydroxy-3-methylbut-2-enyl diphosphate + 2 reduced [2Fe-2S]-[ferredoxin] + 2 H(+). The catalysed reaction is dimethylallyl diphosphate + 2 oxidized [2Fe-2S]-[ferredoxin] + H2O = (2E)-4-hydroxy-3-methylbut-2-enyl diphosphate + 2 reduced [2Fe-2S]-[ferredoxin] + 2 H(+). It functions in the pathway isoprenoid biosynthesis; dimethylallyl diphosphate biosynthesis; dimethylallyl diphosphate from (2E)-4-hydroxy-3-methylbutenyl diphosphate: step 1/1. The protein operates within isoprenoid biosynthesis; isopentenyl diphosphate biosynthesis via DXP pathway; isopentenyl diphosphate from 1-deoxy-D-xylulose 5-phosphate: step 6/6. Its function is as follows. Catalyzes the conversion of 1-hydroxy-2-methyl-2-(E)-butenyl 4-diphosphate (HMBPP) into a mixture of isopentenyl diphosphate (IPP) and dimethylallyl diphosphate (DMAPP). Acts in the terminal step of the DOXP/MEP pathway for isoprenoid precursor biosynthesis. The sequence is that of 4-hydroxy-3-methylbut-2-enyl diphosphate reductase from Rhodococcus opacus (strain B4).